The chain runs to 88 residues: Small ribosomal subunit protein bS16 (88 aa).

This sequence belongs to the bacterial ribosomal protein bS16 family.

This Mycoplasmopsis pulmonis (strain UAB CTIP) (Mycoplasma pulmonis) protein is Small ribosomal subunit protein bS16.